The following is a 395-amino-acid chain: Transmembrane protein 79 (395 aa).

A disordered region spans residues 1–115 (MTEPETLALL…PPTKLEELPE (115 aa)). Residues 1-204 (MTEPETLALL…GREALRAVAS (204 aa)) are Cytoplasmic-facing. The helical transmembrane segment at 205-225 (VGAALILFPCLLYGAYAFLPF) threads the bilayer. At 226–244 (DAPRLPTMSSRLIYTLRCG) the chain is on the extracellular side. Residues 245 to 265 (VFATFPIVLGILVYGLSLLCF) form a helical membrane-spanning segment. The Cytoplasmic segment spans residues 266-290 (AALRPFGEPRREVEIHRQYVAQSVQ). A helical membrane pass occupies residues 291-311 (LFILYFFNLAVLSTYLPQDAL). Topologically, residues 312–313 (KL) are extracellular. The chain crosses the membrane as a helical span at residues 314 to 334 (LPLLTGLFAISRLIYWLTFAV). At 335-343 (GRSFRGFGY) the chain is on the cytoplasmic side. A helical membrane pass occupies residues 344-364 (GLTFLPLLSMLLWNFYYMFVV). At 365-395 (EPERMLTASESRLDYPDHARSASDYRPRSRG) the chain is on the extracellular side.

The protein localises to the lysosome. It is found in the golgi apparatus. The protein resides in the trans-Golgi network. Its subcellular location is the membrane. Functionally, contributes to the epidermal integrity and skin barrier function. Plays a role in the lamellar granule (LG) secretory system and in the stratum corneum (SC) epithelial cell formation. The sequence is that of Transmembrane protein 79 (TMEM79) from Bos taurus (Bovine).